Here is a 232-residue protein sequence, read N- to C-terminus: LexA repressor (232 aa).

Residues 26-46 (FDEMKDALDLRSKSGIHRLIT) constitute a DNA-binding region (H-T-H motif). Residues Ser153 and Lys191 each act as for autocatalytic cleavage activity in the active site.

This sequence belongs to the peptidase S24 family. Homodimer.

The catalysed reaction is Hydrolysis of Ala-|-Gly bond in repressor LexA.. Represses a number of genes involved in the response to DNA damage (SOS response), including recA and lexA. In the presence of single-stranded DNA, RecA interacts with LexA causing an autocatalytic cleavage which disrupts the DNA-binding part of LexA, leading to derepression of the SOS regulon and eventually DNA repair. The polypeptide is LexA repressor (Bradyrhizobium sp. (strain ORS 278)).